Reading from the N-terminus, the 344-residue chain is tRNA-specific 2-thiouridylase MnmA (344 aa).

Residues 9–16 (AMSGGVDS) and methionine 34 each bind ATP. The active-site Nucleophile is the cysteine 92. An intrachain disulfide couples cysteine 92 to cysteine 188. Glycine 116 provides a ligand contact to ATP. The interval 138–140 (KDQ) is interaction with tRNA. The active-site Cysteine persulfide intermediate is cysteine 188.

Belongs to the MnmA/TRMU family.

The protein resides in the cytoplasm. It catalyses the reaction S-sulfanyl-L-cysteinyl-[protein] + uridine(34) in tRNA + AH2 + ATP = 2-thiouridine(34) in tRNA + L-cysteinyl-[protein] + A + AMP + diphosphate + H(+). Its function is as follows. Catalyzes the 2-thiolation of uridine at the wobble position (U34) of tRNA, leading to the formation of s(2)U34. The protein is tRNA-specific 2-thiouridylase MnmA of Desulfotalea psychrophila (strain LSv54 / DSM 12343).